The primary structure comprises 359 residues: POU domain, class 5, transcription factor 1B (359 aa).

Disordered regions lie at residues M1 to P53 and Q87 to T116. S111 bears the Phosphoserine mark. The POU-specific domain maps to D138–D212. Positions A229–S288 form a DNA-binding region, homeobox. T235 is subject to Phosphothreonine. Residues S236, S288, and S289 each carry the phosphoserine modification. Residues S287 to P322 form a disordered region. A compositionally biased stretch (low complexity) spans A299–V309. Position 354 is a phosphoserine (S354).

It belongs to the POU transcription factor family. Class-5 subfamily. In terms of tissue distribution, detected in epithelial cells of the prostate (at protein level). Detected at the mRNA level in several cancer tissues (breast, uterine cervix, lung, thyroid gland, esophagus, colon, urinary bladder, and glioma).

It localises to the nucleus. It is found in the cytoplasm. In terms of biological role, shows weak transcriptional activator activity. The sequence is that of POU domain, class 5, transcription factor 1B (POU5F1B) from Homo sapiens (Human).